The sequence spans 196 residues: Interleukin-23 subunit alpha (196 aa).

An N-terminal signal peptide occupies residues methionine 1–alanine 21.

Belongs to the IL-6 superfamily. As to quaternary structure, heterodimer with IL12B; disulfide-linked. The heterodimer is known as interleukin IL-23. Interacts with IL23R; this interaction enables recruitment of IL12RB1. Secreted by activated dendritic cells (at protein level). Detected in various tissues with higher expression in polarized Th1 cells and activated macrophages.

The protein resides in the secreted. Its function is as follows. Associates with IL12B to form the IL-23 interleukin, a heterodimeric cytokine which functions in innate and adaptive immunity. IL-23 may constitute with IL-17 an acute response to infection in peripheral tissues. IL-23 binds to a heterodimeric receptor complex composed of IL12RB1 and IL23R, activates the Jak-Stat signaling cascade, stimulates memory rather than naive T-cells and promotes production of pro-inflammatory cytokines. IL-23 induces autoimmune inflammation and thus may be responsible for autoimmune inflammatory diseases and may be important for tumorigenesis. Associates with IL12B to form the pro-inflammatory cytokine IL-23 that plays different roles in innate and adaptive immunity. Released by antigen-presenting cells such as dendritic cells or macrophages, binds to a heterodimeric receptor complex composed of IL12RB1 and IL23R to activate JAK2 and TYK2 which then phosphorylate the receptor to form a docking site leading to the phosphorylation of STAT3 and STAT4. This process leads to activation of several pathways including p38 MAPK or NF-kappa-B and promotes the production of pro-inflammatory cytokines such as interleukin-17A/IL17A. In turn, participates in the early and effective intracellular bacterial clearance. Promotes the expansion and survival of T-helper 17 cells, a CD4-positive helper T-cell subset that produces IL-17, as well as other IL-17-producing cells. In Mus musculus (Mouse), this protein is Interleukin-23 subunit alpha (Il23a).